A 193-amino-acid polypeptide reads, in one-letter code: dCTP deaminase (193 aa).

Residues R110–R115, D128, V136–E138, Y171, K178, and Q182 contribute to the dCTP site. The active-site Proton donor/acceptor is E138.

Belongs to the dCTP deaminase family. In terms of assembly, homotrimer.

It catalyses the reaction dCTP + H2O + H(+) = dUTP + NH4(+). Its pathway is pyrimidine metabolism; dUMP biosynthesis; dUMP from dCTP (dUTP route): step 1/2. In terms of biological role, catalyzes the deamination of dCTP to dUTP. This Aeromonas salmonicida (strain A449) protein is dCTP deaminase.